The following is a 110-amino-acid chain: Large ribosomal subunit protein uL22 (110 aa).

It belongs to the universal ribosomal protein uL22 family. As to quaternary structure, part of the 50S ribosomal subunit.

Functionally, this protein binds specifically to 23S rRNA; its binding is stimulated by other ribosomal proteins, e.g. L4, L17, and L20. It is important during the early stages of 50S assembly. It makes multiple contacts with different domains of the 23S rRNA in the assembled 50S subunit and ribosome. Its function is as follows. The globular domain of the protein is located near the polypeptide exit tunnel on the outside of the subunit, while an extended beta-hairpin is found that lines the wall of the exit tunnel in the center of the 70S ribosome. The sequence is that of Large ribosomal subunit protein uL22 from Alkaliphilus oremlandii (strain OhILAs) (Clostridium oremlandii (strain OhILAs)).